Here is a 455-residue protein sequence, read N- to C-terminus: Bifunctional protein GlmU (455 aa).

Positions Met1–Arg226 are pyrophosphorylase. UDP-N-acetyl-alpha-D-glucosamine contacts are provided by residues Leu8–Gly11, Lys22, Gln73, Gly78–Thr79, Tyr99–Asp101, Gly136, Glu151, Asn166, and Asn224. Asp101 serves as a coordination point for Mg(2+). Asn224 provides a ligand contact to Mg(2+). A linker region spans residues Thr227–Lys247. Residues Gly248 to Lys455 form an N-acetyltransferase region. Residues Arg330 and Lys348 each contribute to the UDP-N-acetyl-alpha-D-glucosamine site. His360 functions as the Proton acceptor in the catalytic mechanism. Residues Tyr363 and Asn374 each contribute to the UDP-N-acetyl-alpha-D-glucosamine site. Acetyl-CoA is bound by residues Ala377, Asn383–Tyr384, Ser402, Ala420, and Arg437.

In the N-terminal section; belongs to the N-acetylglucosamine-1-phosphate uridyltransferase family. It in the C-terminal section; belongs to the transferase hexapeptide repeat family. In terms of assembly, homotrimer. The cofactor is Mg(2+).

It is found in the cytoplasm. It catalyses the reaction alpha-D-glucosamine 1-phosphate + acetyl-CoA = N-acetyl-alpha-D-glucosamine 1-phosphate + CoA + H(+). The enzyme catalyses N-acetyl-alpha-D-glucosamine 1-phosphate + UTP + H(+) = UDP-N-acetyl-alpha-D-glucosamine + diphosphate. It participates in nucleotide-sugar biosynthesis; UDP-N-acetyl-alpha-D-glucosamine biosynthesis; N-acetyl-alpha-D-glucosamine 1-phosphate from alpha-D-glucosamine 6-phosphate (route II): step 2/2. Its pathway is nucleotide-sugar biosynthesis; UDP-N-acetyl-alpha-D-glucosamine biosynthesis; UDP-N-acetyl-alpha-D-glucosamine from N-acetyl-alpha-D-glucosamine 1-phosphate: step 1/1. The protein operates within bacterial outer membrane biogenesis; LPS lipid A biosynthesis. Catalyzes the last two sequential reactions in the de novo biosynthetic pathway for UDP-N-acetylglucosamine (UDP-GlcNAc). The C-terminal domain catalyzes the transfer of acetyl group from acetyl coenzyme A to glucosamine-1-phosphate (GlcN-1-P) to produce N-acetylglucosamine-1-phosphate (GlcNAc-1-P), which is converted into UDP-GlcNAc by the transfer of uridine 5-monophosphate (from uridine 5-triphosphate), a reaction catalyzed by the N-terminal domain. In Francisella tularensis subsp. tularensis (strain SCHU S4 / Schu 4), this protein is Bifunctional protein GlmU.